Reading from the N-terminus, the 349-residue chain is 3-dehydroquinate synthase (349 aa).

Residues 63-68, 97-101, 121-122, Lys-134, Lys-143, and 161-164 each bind NAD(+); these read DGEEYK, GVIGD, TT, and FLTT. Glu-176, His-235, and His-252 together coordinate Zn(2+).

It belongs to the sugar phosphate cyclases superfamily. Dehydroquinate synthase family. Co(2+) serves as cofactor. Zn(2+) is required as a cofactor. It depends on NAD(+) as a cofactor.

It localises to the cytoplasm. It carries out the reaction 7-phospho-2-dehydro-3-deoxy-D-arabino-heptonate = 3-dehydroquinate + phosphate. The protein operates within metabolic intermediate biosynthesis; chorismate biosynthesis; chorismate from D-erythrose 4-phosphate and phosphoenolpyruvate: step 2/7. Functionally, catalyzes the conversion of 3-deoxy-D-arabino-heptulosonate 7-phosphate (DAHP) to dehydroquinate (DHQ). The chain is 3-dehydroquinate synthase from Sulfurimonas denitrificans (strain ATCC 33889 / DSM 1251) (Thiomicrospira denitrificans (strain ATCC 33889 / DSM 1251)).